Consider the following 275-residue polypeptide: Dermonecrotic toxin LhSicTox-alphaVI1i (275 aa).

The active site involves H5. Mg(2+) contacts are provided by E25 and D27. The active-site Nucleophile is H41. 2 disulfide bridges follow: C45-C51 and C47-C192. Mg(2+) is bound at residue D85.

It belongs to the arthropod phospholipase D family. Class II subfamily. The cofactor is Mg(2+). In terms of tissue distribution, expressed by the venom gland.

Its subcellular location is the secreted. The catalysed reaction is an N-(acyl)-sphingosylphosphocholine = an N-(acyl)-sphingosyl-1,3-cyclic phosphate + choline. It carries out the reaction an N-(acyl)-sphingosylphosphoethanolamine = an N-(acyl)-sphingosyl-1,3-cyclic phosphate + ethanolamine. The enzyme catalyses a 1-acyl-sn-glycero-3-phosphocholine = a 1-acyl-sn-glycero-2,3-cyclic phosphate + choline. It catalyses the reaction a 1-acyl-sn-glycero-3-phosphoethanolamine = a 1-acyl-sn-glycero-2,3-cyclic phosphate + ethanolamine. In terms of biological role, dermonecrotic toxins cleave the phosphodiester linkage between the phosphate and headgroup of certain phospholipids (sphingolipid and lysolipid substrates), forming an alcohol (often choline) and a cyclic phosphate. This toxin acts on sphingomyelin (SM). It may also act on ceramide phosphoethanolamine (CPE), lysophosphatidylcholine (LPC) and lysophosphatidylethanolamine (LPE), but not on lysophosphatidylserine (LPS), and lysophosphatidylglycerol (LPG). It acts by transphosphatidylation, releasing exclusively cyclic phosphate products as second products. Induces dermonecrosis, hemolysis, increased vascular permeability, edema, inflammatory response, and platelet aggregation. This Loxosceles hirsuta (Recluse spider) protein is Dermonecrotic toxin LhSicTox-alphaVI1i.